A 185-amino-acid chain; its full sequence is Capsid protein (185 aa).

The disordered stretch occupies residues 136-185 (NAPILSTLPETTVVRRRDRGRSPRRRTPSPRRRRSQSPRRRRSQSRESQC). The span at 149-178 (VRRRDRGRSPRRRTPSPRRRRSQSPRRRRS) shows a compositional bias: basic residues. Residues S157, S164, and S172 each carry the phosphoserine; by host modification. Residues 157–163 (SPRRRTP) form a 1; half-length repeat. The 3 X 8 AA repeats of S-P-R-R-R-[PR]-S-Q stretch occupies residues 157–179 (SPRRRTPSPRRRRSQSPRRRRSQ). Residues 160–177 (RRTPSPRRRRSQSPRRRR) carry the Bipartite nuclear localization signal motif. 2 consecutive repeat copies span residues 164 to 171 (SPRRRRSQ) and 172 to 179 (SPRRRRSQ). An RNA binding region spans residues 179 to 185 (QSRESQC).

Belongs to the orthohepadnavirus core antigen family. In terms of assembly, homodimerizes, then multimerizes. Interacts with cytosol exposed regions of viral L glycoprotein present in the reticulum-to-Golgi compartment. Interacts with human FLNB. Phosphorylated form interacts with host importin alpha; this interaction depends on the exposure of the NLS, which itself depends upon genome maturation and/or phosphorylation of the capsid protein. Interacts with host NUP153. Post-translationally, phosphorylated by host SRPK1, SRPK2, and maybe protein kinase C or GAPDH. Phosphorylation is critical for pregenomic RNA packaging. Protein kinase C phosphorylation is stimulated by HBx protein and may play a role in transport of the viral genome to the nucleus at the late step during the viral replication cycle.

Its subcellular location is the virion. The protein localises to the host cytoplasm. Functionally, self assembles to form an icosahedral capsid. Most capsids appear to be large particles with an icosahedral symmetry of T=4 and consist of 240 copies of capsid protein, though a fraction forms smaller T=3 particles consisting of 180 capsid proteins. Entering capsids are transported along microtubules to the nucleus. Phosphorylation of the capsid is thought to induce exposure of nuclear localization signal in the C-terminal portion of the capsid protein that allows binding to the nuclear pore complex via the importin (karyopherin-) alpha and beta. Capsids are imported in intact form through the nuclear pore into the nuclear basket, where it probably binds NUP153. Only capsids that contain the mature viral genome can release the viral DNA and capsid protein into the nucleoplasm. Immature capsids get stuck in the basket. Capsids encapsulate the pre-genomic RNA and the P protein. Pre-genomic RNA is reverse-transcribed into DNA while the capsid is still in the cytoplasm. The capsid can then either be directed to the nucleus, providing more genomes for transcription, or bud through the endoplasmic reticulum to provide new virions. This Hepatitis B virus genotype A1 subtype adw (isolate Philippines/pFDW294/1988) (HBV-A) protein is Capsid protein.